The sequence spans 301 residues: Vomeronasal type-1 receptor 4 (301 aa).

Residues 1–15 (MASRYVAVGMMLSQT) lie on the Extracellular side of the membrane. The chain crosses the membrane as a helical span at residues 16 to 36 (VVGVLGSFSLLLHYLSLHYIG). Residues 37 to 48 (CRLRSADLIVKH) are Cytoplasmic-facing. The helical transmembrane segment at 49–69 (LIAASFLTLLCKGVPQTMAAF) threads the bilayer. Topologically, residues 70-88 (RVRYFLNAIGCKLVFYLHR) are extracellular. A helical membrane pass occupies residues 89–107 (VGRGVSTGTTCLLSVFQVI). Residues 108–126 (TVSSRKSRWAKLKEKAPKH) lie on the Cytoplasmic side of the membrane. Residues 127-147 (VGFSVLLCWILCMLVNIIFPI) form a helical membrane-spanning segment. The Extracellular portion of the chain corresponds to 148–185 (YVTGKRNHTNITVNKDLGDCCGRGNNKIAQTLRAMLLS). N-linked (GlcNAc...) asparagine glycosylation is found at N154 and N157. A helical membrane pass occupies residues 186 to 206 (FPDVLCLGFMLWASSSMVCIL). Over 207 to 234 (HRHKQRVQHIHRSNLSPRASPENRATQS) the chain is Cytoplasmic. Residues 235 to 255 (ILIPVSTFVSSYTLSCLLQVC) traverse the membrane as a helical segment. At 256-264 (MALLDNPNS) the chain is on the extracellular side. A helical membrane pass occupies residues 265-285 (LLVNTSALMSACFPTLSPFVL). At 286–301 (MSCDPSVYRLCFAWKR) the chain is on the cytoplasmic side.

The protein belongs to the G-protein coupled receptor 1 family.

The protein resides in the cell membrane. Its function is as follows. Putative pheromone receptor. This chain is Vomeronasal type-1 receptor 4 (VN1R4), found in Pongo pygmaeus (Bornean orangutan).